The sequence spans 328 residues: GMP reductase (328 aa).

Cysteine 176 acts as the Thioimidate intermediate in catalysis. 205–228 provides a ligand contact to NADP(+); it reads IIADGGIRTHGDIAKSIRFGASMI.

The protein belongs to the IMPDH/GMPR family. GuaC type 2 subfamily.

It carries out the reaction IMP + NH4(+) + NADP(+) = GMP + NADPH + 2 H(+). Functionally, catalyzes the irreversible NADPH-dependent deamination of GMP to IMP. It functions in the conversion of nucleobase, nucleoside and nucleotide derivatives of G to A nucleotides, and in maintaining the intracellular balance of A and G nucleotides. This is GMP reductase from Streptococcus pneumoniae (strain CGSP14).